The chain runs to 807 residues: Probable phosphoketolase (807 aa).

The protein belongs to the XFP family. Thiamine diphosphate is required as a cofactor.

The protein is Probable phosphoketolase of Mesorhizobium japonicum (strain LMG 29417 / CECT 9101 / MAFF 303099) (Mesorhizobium loti (strain MAFF 303099)).